The following is a 255-amino-acid chain: Placenta-expressed transcript 1 protein (255 aa).

The signal sequence occupies residues 1–26 (MPALRTLLPHLGLFLCLALCFSPSFS). Asn57, Asn67, and Asn126 each carry an N-linked (GlcNAc...) asparagine glycan. Ser236 carries GPI-anchor amidated serine lipidation. Positions 237-255 (PLAGALHILLVFLISKLLF) are cleaved as a propeptide — removed in mature form.

Post-translationally, N-glycosylated. In terms of processing, GPI-anchored.

It localises to the apical cell membrane. Functionally, modulates leading keratinocyte migration and cellular adhesion to matrix proteins during a wound-healing response and promotes wound repair. May play a role during trichilemmal differentiation of the hair follicle. This Rattus norvegicus (Rat) protein is Placenta-expressed transcript 1 protein (Plet1).